The chain runs to 221 residues: MFIYKDINYAINNRFRGFYPVVIDIESAGFQADTDALLEIAIVTLKMNKSGWLKIDDRLHFHIIPFKGSIIKAESVAFNKIDPFNPLRGAVSEKNALKNIFKLVRKKININKCRKGILVAHNANFDHNFLMAASKRVGNLNNPFHPFTTFDTAALSGLIFGQTVLAKACKLAGIPFDTNQAHSALYDTIQTAYLFCELVNRWKRLGGWPPNSSHRKKTDEI.

The Exonuclease domain maps to 21–195 (VVIDIESAGF…YDTIQTAYLF (175 aa)). Mg(2+)-binding residues include Asp24, Glu26, His182, and Asp187. The active-site Proton donor/acceptor is the His182.

The protein belongs to the RNase T family. As to quaternary structure, homodimer. It depends on Mg(2+) as a cofactor.

Its function is as follows. Trims short 3' overhangs of a variety of RNA species, leaving a one or two nucleotide 3' overhang. Responsible for the end-turnover of tRNA: specifically removes the terminal AMP residue from uncharged tRNA (tRNA-C-C-A). Also appears to be involved in tRNA biosynthesis. This is Ribonuclease T from Buchnera aphidicola subsp. Cinara cedri (strain Cc).